Consider the following 304-residue polypeptide: ATP phosphoribosyltransferase (304 aa).

The protein belongs to the ATP phosphoribosyltransferase family. Long subfamily. Mg(2+) is required as a cofactor.

It localises to the cytoplasm. The enzyme catalyses 1-(5-phospho-beta-D-ribosyl)-ATP + diphosphate = 5-phospho-alpha-D-ribose 1-diphosphate + ATP. The protein operates within amino-acid biosynthesis; L-histidine biosynthesis; L-histidine from 5-phospho-alpha-D-ribose 1-diphosphate: step 1/9. Feedback inhibited by histidine. In terms of biological role, catalyzes the condensation of ATP and 5-phosphoribose 1-diphosphate to form N'-(5'-phosphoribosyl)-ATP (PR-ATP). Has a crucial role in the pathway because the rate of histidine biosynthesis seems to be controlled primarily by regulation of HisG enzymatic activity. The protein is ATP phosphoribosyltransferase of Xanthomonas campestris pv. campestris (strain B100).